Reading from the N-terminus, the 430-residue chain is Bone morphogenetic protein 7 (430 aa).

An N-terminal signal peptide occupies residues 1-29 (MHVRSLRAAAPHSFVALWAPLFLLRSALA). A propeptide spanning residues 30–291 (DFSLDNEVHS…ATEVHLRSIR (262 aa)) is cleaved from the precursor. Residues Asn-186, Asn-301, Asn-320, and Asn-371 are each glycosylated (N-linked (GlcNAc...) asparagine). Residues 290 to 310 (IRSTGGKQRSQNRSKTPKNQE) form a disordered region. Cystine bridges form between Cys-329–Cys-395, Cys-358–Cys-427, and Cys-362–Cys-429.

This sequence belongs to the TGF-beta family. In terms of assembly, homodimer; disulfide-linked. Interacts with SOSTDC1. Interacts with TWSG1. Interacts with FBN1 (via N-terminal domain) and FBN2. Interacts with type I receptor ACVR1. Interacts with type II receptor ACVR2A. Interacts with NOG; this interaction inhibits canonical BMP signaling. Interacts with SCUBE3. Interacts with ERFE; the interaction inhibits BMP-induced transcription of HAMP. Interacts with TGFBR3.

Its subcellular location is the secreted. Growth factor of the TGF-beta superfamily that plays important role in various biological processes, including embryogenesis, hematopoiesis, neurogenesis and skeletal morphogenesis. Initiates the canonical BMP signaling cascade by associating with type I receptor ACVR1 and type II receptor ACVR2A. Once all three components are bound together in a complex at the cell surface, ACVR2A phosphorylates and activates ACVR1. In turn, ACVR1 propagates signal by phosphorylating SMAD1/5/8 that travel to the nucleus and act as activators and repressors of transcription of target genes. For specific functions such as growth cone collapse in developing spinal neurons and chemotaxis of monocytes, also uses BMPR2 as type II receptor. Can also signal through non-canonical pathways such as P38 MAP kinase signaling cascade that promotes brown adipocyte differentiation through activation of target genes, including members of the SOX family of transcription factors. Promotes the expression of HAMP, this is repressed by its interaction with ERFE. This is Bone morphogenetic protein 7 (Bmp7) from Mus musculus (Mouse).